The primary structure comprises 360 residues: Aurora kinase B (360 aa).

Positions 93–343 (FDIGRPLGKG…LKGVMEHPWV (251 aa)) constitute a Protein kinase domain. ATP-binding positions include 99-107 (LGKGKFGNV) and lysine 122. Aspartate 216 (proton acceptor) is an active-site residue.

It belongs to the protein kinase superfamily. Ser/Thr protein kinase family. Aurora subfamily. In terms of assembly, component of the chromosomal passenger complex (CPC).

Its subcellular location is the nucleus. It localises to the chromosome. The protein resides in the centromere. It is found in the cytoplasm. The protein localises to the cytoskeleton. Its subcellular location is the spindle. It localises to the midbody. It catalyses the reaction L-seryl-[protein] + ATP = O-phospho-L-seryl-[protein] + ADP + H(+). The enzyme catalyses L-threonyl-[protein] + ATP = O-phospho-L-threonyl-[protein] + ADP + H(+). Its activity is regulated as follows. Kinase activity is stimulated by cell-cycle specific phosphorylation. Its function is as follows. Serine/threonine-protein kinase component of the chromosomal passenger complex (CPC), a complex that acts as a key regulator of mitosis. The CPC complex has essential functions at the centromere in ensuring correct chromosome alignment and segregation and is required for chromatin-induced microtubule stabilization and spindle assembly. Involved in the bipolar attachment of spindle microtubules to kinetochores and is a key regulator for the onset of cytokinesis during mitosis. Required for central/midzone spindle assembly and cleavage furrow formation. Key component of the cytokinesis checkpoint, a process required to delay abscission to prevent both premature resolution of intercellular chromosome bridges and accumulation of DNA damage. Phosphorylates 'Ser-10' of histone H3 during mitosis. In Xenopus tropicalis (Western clawed frog), this protein is Aurora kinase B.